The primary structure comprises 285 residues: Putative sugar uptake protein lin0444 (285 aa).

9 helical membrane passes run 2-21 (SIYLIALLPVLGWGFMPIIA), 31-50 (QLLGTSISALLFAFILFWIL), 55-77 (TVLSFIVSFVSGIFWSFGQLLQF), 111-133 (WQTVTAVIIGVVAVILILIGVVM), 146-168 (SVSFHVYGIVILSSFFLTLYVVT), 172-194 (FDVTGFSIILPQAIGMLTCAIGI), 207-229 (VTFNLMTGLSWSIANLGMFLATA), 233-255 (VATSFSISQACVIVATIGGILIF), and 262-284 (LEWTFILSGILLIMVGVVFLSLL).

It belongs to the GRP transporter (TC 2.A.7.5) family.

The protein localises to the cell membrane. The chain is Putative sugar uptake protein lin0444 from Listeria innocua serovar 6a (strain ATCC BAA-680 / CLIP 11262).